We begin with the raw amino-acid sequence, 175 residues long: Large ribosomal subunit protein uL10 (175 aa).

Belongs to the universal ribosomal protein uL10 family. Part of the ribosomal stalk of the 50S ribosomal subunit. The N-terminus interacts with L11 and the large rRNA to form the base of the stalk. The C-terminus forms an elongated spine to which L12 dimers bind in a sequential fashion forming a multimeric L10(L12)X complex.

In terms of biological role, forms part of the ribosomal stalk, playing a central role in the interaction of the ribosome with GTP-bound translation factors. The chain is Large ribosomal subunit protein uL10 (rplJ) from Xylella fastidiosa (strain 9a5c).